The chain runs to 780 residues: Alpha-xylosidase (780 aa).

N48, N84, N247, and N298 each carry an N-linked (GlcNAc...) asparagine glycan. Active-site residues include D434 and E437. Residue N443 is glycosylated (N-linked (GlcNAc...) asparagine). The active-site Proton donor is D501. A glycan (N-linked (GlcNAc...) asparagine) is linked at N718.

This sequence belongs to the glycosyl hydrolase 31 family.

Its subcellular location is the secreted. The enzyme catalyses Hydrolysis of terminal, non-reducing alpha-D-xylose residues with release of alpha-D-xylose.. Functionally, catalyzes the liberation of alpha-xylose from the non-reducing terminal glucose of xyloglucan oligosaccharides. The polypeptide is Alpha-xylosidase (Emericella nidulans (strain FGSC A4 / ATCC 38163 / CBS 112.46 / NRRL 194 / M139) (Aspergillus nidulans)).